Here is a 581-residue protein sequence, read N- to C-terminus: Coiled-coil domain-containing protein 102A (581 aa).

Disordered stretches follow at residues 1–61 (MNHT…GLGC), 156–219 (QRVR…IGTD), 496–517 (QAED…SLDE), and 534–581 (SRLR…LQIP). Low complexity predominate over residues 39-59 (TPSPSGGTPSSSPPLLLSPGL). The stretch at 70 to 164 (REELRLRELE…AQRVRAEQSS (95 aa)) forms a coiled coil. The segment covering 161–184 (EQSSPENASTAPESISSTASTHSN) has biased composition (polar residues). Positions 185–202 (QPREAEIKQDNQDEEGVR) are enriched in basic and acidic residues. Residues 270-541 (AALEEDTSKL…LQSRLRRQQN (272 aa)) adopt a coiled-coil conformation. Acidic residues predominate over residues 559–581 (EDADGPPSDPDEDEEEELQLQIP).

The protein is Coiled-coil domain-containing protein 102A (ccdc102a) of Danio rerio (Zebrafish).